The chain runs to 392 residues: F-box only protein 5-A (392 aa).

The interval 1–21 (MMCGFASNQSPKKLSSKKSSA) is disordered. The span at 7 to 20 (SNQSPKKLSSKKSS) shows a compositional bias: low complexity. One can recognise an F-box domain in the interval 197–244 (AELFHRDFKHLLTKILRHLSAMDLINVISVSTTWRKLLQKDNWAYNAY). Residues 319-367 (SLKVCVDCGSPAKHDPCLHRAICTRESCKLDFCTRCSCKYHFSKSCLMS) form a ZBR-type zinc finger. Residues Cys323, Cys326, Cys341, Cys346, Cys351, Cys354, His359, and Cys364 each contribute to the Zn(2+) site.

In terms of assembly, part of a SCF (SKP1-cullin-F-box) protein ligase complex. Interacts with btrc. Interacts with skp1. Interacts with cdc20. Interacts with pin1; stabilizes fbxo5 by preventing its association with btrc in an isomerization-dependent pathway; this interaction is present during G2 phase and prevents fbxo5 degradation. Interacts with plk1. Post-translationally, proteolysed; proteolysis is induced by both cyclin B-cdk1 and cyclin A-cdk1/2 complex through probable phosphorylation. Proteolysis is inhibited by pin1 during G2.

It is found in the nucleus. The protein resides in the cytoplasm. The protein localises to the cytoskeleton. Its subcellular location is the spindle. It localises to the microtubule organizing center. It is found in the centrosome. Its pathway is protein modification; protein ubiquitination. Regulates progression through early mitosis by inhibiting the anaphase promoting complex/cyclosome (APC). Binds to the APC activator cdc20 to prevent APC activation. Can also bind directly to the APC to inhibit substrate-binding. Required to arrest unfertilized eggs at metaphase of meiosis II, by preventing their release from metaphase of meiosis II, through inhibition of APC-dependent cyclin B destruction leading to stabilization of cyclin B-cdk1 complex activity. This Xenopus laevis (African clawed frog) protein is F-box only protein 5-A (fbxo5-a).